Consider the following 115-residue polypeptide: Large ribosomal subunit protein bL19 (115 aa).

The protein belongs to the bacterial ribosomal protein bL19 family.

Its function is as follows. This protein is located at the 30S-50S ribosomal subunit interface and may play a role in the structure and function of the aminoacyl-tRNA binding site. This Wigglesworthia glossinidia brevipalpis protein is Large ribosomal subunit protein bL19.